We begin with the raw amino-acid sequence, 1339 residues long: Retrotransposon Gag-like protein 9 (1339 aa).

3 stretches are compositionally biased toward polar residues: residues 533-545, 679-693, and 700-711; these read TVPTSGSVSTQKT, SGTKSTSQMTATTSG, and TRLSGPGATSTP. Disordered regions lie at residues 533-555, 679-711, 845-864, 880-901, 982-1010, and 1078-1116; these read TVPTSGSVSTQKTRAPVSGPMST, SGTKSTSQMTATTSGGIFMPQTRLSGPGATSTP, GVMSIPLTRTPASRAKSRPQ, PATAGISPSPVRSPASSTLSTL, ATSLPQPRNAASGVIANPPQRAPASGAGS, and ATDSGEASTSHTRFTAPGSKSTPHMTSTAPEMKTPPPKE. A compositionally biased stretch (low complexity) spans 891–901; that stretch reads RSPASSTLSTL. Over residues 1078-1106 the composition is skewed to polar residues; sequence ATDSGEASTSHTRFTAPGSKSTPHMTSTA.

The protein is Retrotransposon Gag-like protein 9 of Mus musculus (Mouse).